We begin with the raw amino-acid sequence, 245 residues long: 1-(5-phosphoribosyl)-5-[(5-phosphoribosylamino)methylideneamino] imidazole-4-carboxamide isomerase (245 aa).

Asp-8 acts as the Proton acceptor in catalysis. Residue Asp-129 is the Proton donor of the active site.

This sequence belongs to the HisA/HisF family.

Its subcellular location is the cytoplasm. The catalysed reaction is 1-(5-phospho-beta-D-ribosyl)-5-[(5-phospho-beta-D-ribosylamino)methylideneamino]imidazole-4-carboxamide = 5-[(5-phospho-1-deoxy-D-ribulos-1-ylimino)methylamino]-1-(5-phospho-beta-D-ribosyl)imidazole-4-carboxamide. It functions in the pathway amino-acid biosynthesis; L-histidine biosynthesis; L-histidine from 5-phospho-alpha-D-ribose 1-diphosphate: step 4/9. This Pelobacter propionicus (strain DSM 2379 / NBRC 103807 / OttBd1) protein is 1-(5-phosphoribosyl)-5-[(5-phosphoribosylamino)methylideneamino] imidazole-4-carboxamide isomerase.